The chain runs to 754 residues: Relaxin receptor 2 (754 aa).

Residues 1 to 416 (MIVFLVFKHL…SSFEDLLANN (416 aa)) are Extracellular-facing. One can recognise an LDL-receptor class A domain in the interval 44 to 81 (SCQKGYFPCGNLTKCLPRAFHCDGKDDCGNGADEENCG). 3 disulfide bridges follow: Cys-45–Cys-58, Cys-52–Cys-71, and Cys-65–Cys-80. Residue Asn-54 is glycosylated (N-linked (GlcNAc...) asparagine). Residue Asn-138 is glycosylated (N-linked (GlcNAc...) asparagine). LRR repeat units follow at residues 138 to 159 (NVTL…VFIK), 162 to 183 (KLKK…AFFG), 186 to 207 (NLQI…IFKD), 210 to 231 (QLTW…LFTG), 234 to 255 (SLFF…MCAQ), 258 to 279 (QLNW…TFLS), 282 to 303 (SLTV…TFSS), 306 to 327 (NLGE…LFKD), 330 to 351 (LLQK…QFES), and 354 to 375 (QLQS…MFQP). Asn-274 carries an N-linked (GlcNAc...) asparagine glycan. An N-linked (GlcNAc...) asparagine glycan is attached at Asn-335. The N-linked (GlcNAc...) asparagine glycan is linked to Asn-378. A helical transmembrane segment spans residues 417-437 (ILRIFVWVIAFITCFGNLFVI). Residues 438 to 455 (GMRSFIKAENTTHAMSIK) lie on the Cytoplasmic side of the membrane. A helical membrane pass occupies residues 456–476 (ILCCADCLMGVYLFFVGIFDI). The Extracellular portion of the chain corresponds to 477-495 (KYRGQYQKYALLWMESVQC). A disulfide bond links Cys-495 and Cys-573. Residues 496–518 (RLMGFLAMLSTEVSVLLLTYLTL) form a helical membrane-spanning segment. At 519-537 (EKFLVIVFPFSNIRPGKRQ) the chain is on the cytoplasmic side. The chain crosses the membrane as a helical span at residues 538–558 (TSVILICIWMAGFLIAVIPFW). Over 559–592 (NKDYFGNFYGKNGVCFPLYYDQTEDIGSKGYSLG) the chain is Extracellular. Residues 593–613 (IFLGVNLLAFLIIVFSYITMF) form a helical membrane-spanning segment. At 614–639 (CSIQKTALQTTEVRNCFGREVAVANR) the chain is on the cytoplasmic side. The chain crosses the membrane as a helical span at residues 640–660 (FFFIVFSDAICWIPVFVVKIL). The Extracellular segment spans residues 661–670 (SLFRVEIPDT). Residues 671–691 (MTSWIVIFFLPVNSALNPILY) form a helical membrane-spanning segment. Over 692–754 (TLTTNFFKDK…LGDSIMKPVS (63 aa)) the chain is Cytoplasmic.

This sequence belongs to the G-protein coupled receptor 1 family. In terms of tissue distribution, expressed mainly in the brain, kidney, muscle, testis, thyroid, uterus, peripheral blood cells and bone marrow.

It localises to the cell membrane. Functionally, receptor for relaxin. The activity of this receptor is mediated by G proteins leading to stimulation of adenylate cyclase and an increase of cAMP. May also be a receptor for Leydig insulin-like peptide (INSL3). The protein is Relaxin receptor 2 (RXFP2) of Homo sapiens (Human).